A 493-amino-acid chain; its full sequence is UDP-glucose 6-dehydrogenase (493 aa).

NAD(+) contacts are provided by residues 11 to 16, Asp36, Arg41, and 89 to 93; these read GAGYVG and VNTPT. The segment at 88–110 is disordered; the sequence is SVNTPTKTYGMGKGRAADLKYIE. Lys107 bears the N6-acetyllysine mark. The tract at residues 129–135 is allosteric switch region; the sequence is KSTVPVR. 130-132 is an NAD(+) binding site; that stretch reads STV. The active-site Proton donor/acceptor is Glu161. Residues 161–165, 220–224, Arg260, and 267–273 contribute to the substrate site; these read EFLAE, KLAAN, and KASVGFG. Residue Glu165 coordinates NAD(+). Lys220 serves as the catalytic Proton donor/acceptor. The active-site Nucleophile is Cys276. 276–279 lines the NAD(+) pocket; it reads CFQK. Positions 321-325 are important for formation of active hexamer structure; the sequence is SLFNT. 338–339 is a binding site for substrate; the sequence is FK. Arg346 lines the NAD(+) pocket. Arg442 lines the substrate pocket. The interval 466–493 is disordered; it reads VSSKRIPYTPGEIPKFSLQDPPNKKPKV. A Phosphothreonine modification is found at Thr474.

Belongs to the UDP-glucose/GDP-mannose dehydrogenase family. Homohexamer.

The catalysed reaction is UDP-alpha-D-glucose + 2 NAD(+) + H2O = UDP-alpha-D-glucuronate + 2 NADH + 3 H(+). It functions in the pathway nucleotide-sugar biosynthesis; UDP-alpha-D-glucuronate biosynthesis; UDP-alpha-D-glucuronate from UDP-alpha-D-glucose: step 1/1. UDP-alpha-D-xylose (UDX) acts as a feedback inhibitor. It binds at the same site as the substrate, but functions as allosteric inhibitor by triggering a conformation change that disrupts the active hexameric ring structure and gives rise to an inactive, horseshoe-shaped hexamer. Functionally, catalyzes the formation of UDP-alpha-D-glucuronate, a constituent of complex glycosaminoglycans. Required for the biosynthesis of chondroitin sulfate and heparan sulfate. Required for embryonic development via its role in the biosynthesis of glycosaminoglycans. Required for proper brain and neuronal development. In Mus musculus (Mouse), this protein is UDP-glucose 6-dehydrogenase (Ugdh).